The sequence spans 500 residues: NAD(P)H-quinone oxidoreductase chain 4, chloroplastic (500 aa).

Transmembrane regions (helical) follow at residues F4–L24, Y35–F55, I87–V107, L113–S130, L134–M154, F167–L187, I211–H231, H242–V262, A272–A292, I305–D325, G330–G350, L386–T406, I416–M436, and L462–V482.

The protein belongs to the complex I subunit 4 family.

It localises to the plastid. It is found in the chloroplast thylakoid membrane. The catalysed reaction is a plastoquinone + NADH + (n+1) H(+)(in) = a plastoquinol + NAD(+) + n H(+)(out). It catalyses the reaction a plastoquinone + NADPH + (n+1) H(+)(in) = a plastoquinol + NADP(+) + n H(+)(out). This Lepidium virginicum (Virginia pepperweed) protein is NAD(P)H-quinone oxidoreductase chain 4, chloroplastic.